Reading from the N-terminus, the 691-residue chain is Elongation factor G 2 (691 aa).

The region spanning 8–287 is the tr-type G domain; sequence DRYRNIGIMA…AVVDYLPSPL (280 aa). Residues 17-24, 85-89, and 139-142 contribute to the GTP site; these read AHIDAGKT, DTPGH, and NKMD.

It belongs to the TRAFAC class translation factor GTPase superfamily. Classic translation factor GTPase family. EF-G/EF-2 subfamily.

It localises to the cytoplasm. Functionally, catalyzes the GTP-dependent ribosomal translocation step during translation elongation. During this step, the ribosome changes from the pre-translocational (PRE) to the post-translocational (POST) state as the newly formed A-site-bound peptidyl-tRNA and P-site-bound deacylated tRNA move to the P and E sites, respectively. Catalyzes the coordinated movement of the two tRNA molecules, the mRNA and conformational changes in the ribosome. The protein is Elongation factor G 2 of Myxococcus xanthus (strain DK1622).